An 88-amino-acid polypeptide reads, in one-letter code: Small ribosomal subunit protein bS20 (88 aa).

Residues M1–R27 form a disordered region.

This sequence belongs to the bacterial ribosomal protein bS20 family.

Its function is as follows. Binds directly to 16S ribosomal RNA. The protein is Small ribosomal subunit protein bS20 of Methylobacterium radiotolerans (strain ATCC 27329 / DSM 1819 / JCM 2831 / NBRC 15690 / NCIMB 10815 / 0-1).